A 627-amino-acid polypeptide reads, in one-letter code: Pescadillo homolog (627 aa).

The BRCT domain occupies 321 to 414 (RLRTLFKGLK…QLLPTNKYFI (94 aa)). Disordered regions lie at residues 450 to 469 (HVQS…ETVD), 488 to 562 (YKKF…LQAR), and 595 to 627 (TIEA…KLGK). Phosphoserine is present on residues serine 453 and serine 457. 2 stretches are compositionally biased toward acidic residues: residues 454 to 469 (DDDS…ETVD) and 497 to 521 (VNED…EELD). A coiled-coil region spans residues 507–538 (DDDNEDDDEEEEELDEKTKRLQEEKQKMSVQS). Residues 522-533 (EKTKRLQEEKQK) show a composition bias toward basic and acidic residues. Residues 540–549 (KVHKVNKRQV) are compositionally biased toward basic residues. Basic and acidic residues-rich tracts occupy residues 550 to 559 (HKAEVDEHRL) and 595 to 615 (TIEA…RKEA). Positions 582 to 625 (KEKEEWLLRKKRRTIEASEKEARKTAKREARKEAAAAAAKASKL) form a coiled coil. The span at 616–627 (AAAAAKASKLGK) shows a compositional bias: low complexity.

The protein belongs to the pescadillo family.

It localises to the nucleus. The protein localises to the nucleolus. The protein resides in the nucleoplasm. In terms of biological role, required for maturation of ribosomal RNAs and formation of the large ribosomal subunit. This is Pescadillo homolog from Drosophila sechellia (Fruit fly).